A 320-amino-acid chain; its full sequence is o-succinylbenzoate synthase (320 aa).

Residue Lys-133 is the Proton donor of the active site. Mg(2+) is bound by residues Asp-161, Glu-190, and Asp-213. The active-site Proton acceptor is the Lys-235.

It belongs to the mandelate racemase/muconate lactonizing enzyme family. MenC type 1 subfamily. Requires a divalent metal cation as cofactor.

It catalyses the reaction (1R,6R)-6-hydroxy-2-succinyl-cyclohexa-2,4-diene-1-carboxylate = 2-succinylbenzoate + H2O. It participates in quinol/quinone metabolism; 1,4-dihydroxy-2-naphthoate biosynthesis; 1,4-dihydroxy-2-naphthoate from chorismate: step 4/7. It functions in the pathway quinol/quinone metabolism; menaquinone biosynthesis. Converts 2-succinyl-6-hydroxy-2,4-cyclohexadiene-1-carboxylate (SHCHC) to 2-succinylbenzoate (OSB). The sequence is that of o-succinylbenzoate synthase from Salmonella heidelberg (strain SL476).